Consider the following 254-residue polypeptide: Uridylate kinase (254 aa).

An ATP-binding site is contributed by 9–12; sequence KLSG. Residue glycine 51 coordinates UMP. ATP is bound by residues glycine 52 and arginine 56. UMP contacts are provided by residues aspartate 72 and 133-140; that span reads SGNPFFTT. ATP contacts are provided by threonine 160, tyrosine 166, and aspartate 169.

This sequence belongs to the UMP kinase family. Homohexamer.

It is found in the cytoplasm. It catalyses the reaction UMP + ATP = UDP + ADP. It participates in pyrimidine metabolism; CTP biosynthesis via de novo pathway; UDP from UMP (UMPK route): step 1/1. With respect to regulation, inhibited by UTP. Catalyzes the reversible phosphorylation of UMP to UDP. The polypeptide is Uridylate kinase (Synechococcus sp. (strain JA-3-3Ab) (Cyanobacteria bacterium Yellowstone A-Prime)).